The sequence spans 457 residues: Guanine nucleotide-binding protein subunit alpha homolog (457 aa).

The 327-residue stretch at 131–457 (RQVKLLLLGA…QRNLNALMLQ (327 aa)) folds into the G-alpha domain. Positions 134–147 (KLLLLGAGESGKST) are G1 motif. GTP is bound by residues 139–146 (GAGESGKS), 274–280 (LHCRKAT), 299–303 (DVGGQ), 369–372 (NKTD), and Ala-429. Mg(2+)-binding residues include Ser-146 and Thr-280. Residues 272–280 (DILHCRKAT) are G2 motif. The segment at 295-304 (FVFVDVGGQR) is G3 motif. The interval 365–372 (ILFLNKTD) is G4 motif. A G5 motif region spans residues 427 to 432 (TTAIDT).

The protein belongs to the G-alpha family. G(12) subfamily. G proteins are composed of 3 units; alpha, beta and gamma. The alpha chain contains the guanine nucleotide binding site. In terms of tissue distribution, in ovary, expressed in nurse cells and oocyte. In early embryos, distributed uniformly. At the extended germband stage, accumulates in the mesoderm.

The protein localises to the cytoplasm. Functionally, may play a role in a signal transduction pathway used during gastrulation. Required specifically for the ventral furrow and posterior midgut invaginations, where it is necessary for coordinating cell shape changes. In terms of biological role, guanine nucleotide-binding proteins (G proteins) are involved as modulators or transducers in various transmembrane signaling systems. In Drosophila melanogaster (Fruit fly), this protein is Guanine nucleotide-binding protein subunit alpha homolog (cta).